The primary structure comprises 250 residues: Uracil-DNA glycosylase (250 aa).

D78 serves as the catalytic Proton acceptor. Positions 228 to 250 (RGQKPVDWSGEQNNASRQGKFAL) are disordered.

Belongs to the uracil-DNA glycosylase (UDG) superfamily. UNG family.

The protein resides in the cytoplasm. The enzyme catalyses Hydrolyzes single-stranded DNA or mismatched double-stranded DNA and polynucleotides, releasing free uracil.. Functionally, excises uracil residues from the DNA which can arise as a result of misincorporation of dUMP residues by DNA polymerase or due to deamination of cytosine. The polypeptide is Uracil-DNA glycosylase (Bordetella bronchiseptica (strain ATCC BAA-588 / NCTC 13252 / RB50) (Alcaligenes bronchisepticus)).